We begin with the raw amino-acid sequence, 304 residues long: Sulfate adenylyltransferase subunit 2 (304 aa).

This sequence belongs to the PAPS reductase family. CysD subfamily. In terms of assembly, heterodimer composed of CysD, the smaller subunit, and CysN.

The catalysed reaction is sulfate + ATP + H(+) = adenosine 5'-phosphosulfate + diphosphate. Its pathway is sulfur metabolism; hydrogen sulfide biosynthesis; sulfite from sulfate: step 1/3. Its function is as follows. With CysN forms the ATP sulfurylase (ATPS) that catalyzes the adenylation of sulfate producing adenosine 5'-phosphosulfate (APS) and diphosphate, the first enzymatic step in sulfur assimilation pathway. APS synthesis involves the formation of a high-energy phosphoric-sulfuric acid anhydride bond driven by GTP hydrolysis by CysN coupled to ATP hydrolysis by CysD. In Halorhodospira halophila (strain DSM 244 / SL1) (Ectothiorhodospira halophila (strain DSM 244 / SL1)), this protein is Sulfate adenylyltransferase subunit 2.